A 448-amino-acid chain; its full sequence is Phosphoglucosamine mutase (448 aa).

Catalysis depends on S100, which acts as the Phosphoserine intermediate. 4 residues coordinate Mg(2+): S100, D240, D242, and D244. S100 carries the post-translational modification Phosphoserine.

The protein belongs to the phosphohexose mutase family. The cofactor is Mg(2+). Activated by phosphorylation.

The enzyme catalyses alpha-D-glucosamine 1-phosphate = D-glucosamine 6-phosphate. Its function is as follows. Catalyzes the conversion of glucosamine-6-phosphate to glucosamine-1-phosphate. The protein is Phosphoglucosamine mutase of Bacillus cytotoxicus (strain DSM 22905 / CIP 110041 / 391-98 / NVH 391-98).